A 460-amino-acid chain; its full sequence is Transcription factor AP-2-beta (460 aa).

Lysine 21 is covalently cross-linked (Glycyl lysine isopeptide (Lys-Gly) (interchain with G-Cter in SUMO)). A disordered region spans residues 30-139 (HDGVPSHSSR…PQLSGLDPRR (110 aa)). A compositionally biased stretch (polar residues) spans 35–51 (SHSSRLSQLGSVSQGPY). The span at 121 to 132 (LLPQPRAALPQL) shows a compositional bias: low complexity. Serine 258 is modified (phosphoserine; by PKA). Residues 435–460 (NTTTNRHTSGEGPGSKTGDKEEKHRK) are disordered. Positions 451–460 (TGDKEEKHRK) are enriched in basic and acidic residues.

Belongs to the AP-2 family. In terms of assembly, binds DNA as a dimer. Can form homodimers or heterodimers with other AP-2 family members. Interacts with CITED4. Interacts with UBE2I. Interacts with KCTD1; this interaction represses transcription activation. Interacts with CITED2 (via C-terminus); the interaction stimulates TFAP2B-transcriptional activity. Sumoylated on Lys-21; which inhibits transcriptional activity.

It is found in the nucleus. Functionally, sequence-specific DNA-binding protein that interacts with inducible viral and cellular enhancer elements to regulate transcription of selected genes. AP-2 factors bind to the consensus sequence 5'-GCCNNNGGC-3' and activate genes involved in a large spectrum of important biological functions including proper eye, face, body wall, limb and neural tube development. They also suppress a number of genes including MCAM/MUC18, C/EBP alpha and MYC. AP-2-beta appears to be required for normal face and limb development and for proper terminal differentiation and function of renal tubular epithelia. The protein is Transcription factor AP-2-beta (TFAP2B) of Canis lupus familiaris (Dog).